Consider the following 499-residue polypeptide: Alpha-amylase B (499 aa).

Residues 1-21 (MMVAWWSLFLYGLQVAAPALA) form the signal peptide. A disulfide bridge links Cys51 with Cys59. The substrate site is built by Gln56 and Trp104. Asn142 contacts Ca(2+). His143 lines the substrate pocket. A disulfide bond links Cys171 and Cys185. Ca(2+) contacts are provided by Glu183 and Asp196. N-linked (GlcNAc...) asparagine glycosylation occurs at Asn218. Residue Arg225 coordinates substrate. Ca(2+)-binding residues include Asp227, His231, and Glu251. Asp227 serves as the catalytic Nucleophile. Residue 230–231 (KH) coordinates substrate. Glu251 acts as the Proton donor in catalysis. Substrate is bound at residue Gly255. Residues Cys261 and Cys304 are joined by a disulfide bond. Asp318 and Arg365 together coordinate substrate. Cys461 and Cys496 are joined by a disulfide.

It belongs to the glycosyl hydrolase 13 family. Requires Ca(2+) as cofactor.

The catalysed reaction is Endohydrolysis of (1-&gt;4)-alpha-D-glucosidic linkages in polysaccharides containing three or more (1-&gt;4)-alpha-linked D-glucose units.. This Aspergillus awamori (Black koji mold) protein is Alpha-amylase B (amyB).